The following is a 216-amino-acid chain: Maintenance of carboxysome distribution protein A (216 aa).

Positions 16, 17, 19, 20, 21, 22, and 45 each coordinate ATP. Thr21 is a Mg(2+) binding site.

The protein belongs to the ParA family. McdA subfamily. Self-associates, associates with McdB.

The protein resides in the cytoplasm. It localises to the nucleoid. It catalyses the reaction ATP + H2O = ADP + phosphate + H(+). Its function is as follows. McdA and McdB together mediate carboxysome positioning on the nucleoid and prevent their aggregation in the cell. McdA is an ATPase that forms dynamic gradients on the nucleoid in response to adapter protein McdB, which associates with carboxysomes. The interplay between McdA gradients on the nucleoid and McdB-bound carboxysomes result in the equal spacing of Cbs along the cell length. In terms of biological role, incorrect positioning (aggregation) of carboxysomes results in reduced CO(2) fixation by encapsulated form 1 ribulose-1,5-bisphosphate carboxylase (RuBisCO, cbbL/cbbS), which leads to slower growth. This Halothiobacillus neapolitanus (strain ATCC 23641 / c2) (Thiobacillus neapolitanus) protein is Maintenance of carboxysome distribution protein A.